The chain runs to 868 residues: Paladin (868 aa).

Gly-2 is lipidated: N-myristoyl glycine.

The protein belongs to the paladin family.

The protein localises to the cytoplasm. It localises to the cytosol. In Gallus gallus (Chicken), this protein is Paladin (PALD1).